A 635-amino-acid polypeptide reads, in one-letter code: 1-deoxy-D-xylulose-5-phosphate synthase (635 aa).

Residues His78 and 119–121 (GHA) each bind thiamine diphosphate. Asp150 is a binding site for Mg(2+). Thiamine diphosphate contacts are provided by residues 151–152 (GS), Asn179, Phe291, and Glu376. A Mg(2+)-binding site is contributed by Asn179.

This sequence belongs to the transketolase family. DXPS subfamily. As to quaternary structure, homodimer. It depends on Mg(2+) as a cofactor. Thiamine diphosphate serves as cofactor.

The catalysed reaction is D-glyceraldehyde 3-phosphate + pyruvate + H(+) = 1-deoxy-D-xylulose 5-phosphate + CO2. It functions in the pathway metabolic intermediate biosynthesis; 1-deoxy-D-xylulose 5-phosphate biosynthesis; 1-deoxy-D-xylulose 5-phosphate from D-glyceraldehyde 3-phosphate and pyruvate: step 1/1. Its function is as follows. Catalyzes the acyloin condensation reaction between C atoms 2 and 3 of pyruvate and glyceraldehyde 3-phosphate to yield 1-deoxy-D-xylulose-5-phosphate (DXP). This Chlorobaculum tepidum (strain ATCC 49652 / DSM 12025 / NBRC 103806 / TLS) (Chlorobium tepidum) protein is 1-deoxy-D-xylulose-5-phosphate synthase.